Here is a 330-residue protein sequence, read N- to C-terminus: tRNA U34 carboxymethyltransferase (330 aa).

Carboxy-S-adenosyl-L-methionine contacts are provided by residues Lys98, Trp112, Lys117, Gly137, 187-188 (ME), Met203, Tyr207, and Arg322. The tract at residues 309–330 (NPSKTIEGYPGPKRATLIAEKP) is disordered.

It belongs to the class I-like SAM-binding methyltransferase superfamily. CmoB family. As to quaternary structure, homotetramer.

It carries out the reaction carboxy-S-adenosyl-L-methionine + 5-hydroxyuridine(34) in tRNA = 5-carboxymethoxyuridine(34) in tRNA + S-adenosyl-L-homocysteine + H(+). In terms of biological role, catalyzes carboxymethyl transfer from carboxy-S-adenosyl-L-methionine (Cx-SAM) to 5-hydroxyuridine (ho5U) to form 5-carboxymethoxyuridine (cmo5U) at position 34 in tRNAs. This chain is tRNA U34 carboxymethyltransferase, found in Marinobacter nauticus (strain ATCC 700491 / DSM 11845 / VT8) (Marinobacter aquaeolei).